Consider the following 136-residue polypeptide: uncharacterized protein (136 aa).

The tract at residues 1 to 33 is disordered; the sequence is MRDHLPPGLPPDPFADDPCDPSAALEAVEPGQP.

The protein to M.leprae ML0386.

This is an uncharacterized protein from Mycobacterium tuberculosis (strain CDC 1551 / Oshkosh).